We begin with the raw amino-acid sequence, 224 residues long: UPF0758 protein Patl_0046 (224 aa).

In terms of domain architecture, MPN spans 102 to 224 (VFNSAQQTKH…AVSFAERGLI (123 aa)). Zn(2+)-binding residues include His-173, His-175, and Asp-186. Residues 173 to 186 (HNHPSGVAEPSQAD) carry the JAMM motif motif.

This sequence belongs to the UPF0758 family.

This Pseudoalteromonas atlantica (strain T6c / ATCC BAA-1087) protein is UPF0758 protein Patl_0046.